The chain runs to 107 residues: MKWVVIDTVIQPTCGISFSAIWGDMKMIIWYQSTIFLPPGSIFTPVKPGIILKDKEYPITIYNIAPFNKNLWSLLKSSQECPPGESEITNKCLHKSCIIKICPYGLK.

Belongs to the IraM/RssC family.

The protein resides in the cytoplasm. Functionally, inhibits RpoS proteolysis by regulating RssB activity, thereby increasing the stability of the sigma stress factor RpoS during magnesium starvation. The polypeptide is Anti-adapter protein IraM (Shigella dysenteriae serotype 1 (strain Sd197)).